We begin with the raw amino-acid sequence, 273 residues long: Signal recognition particle subunit SEC65 (273 aa).

Residues 25 to 71 (PSLRTPIAPKITPKVVRSQDQENPAFLPGTNNNSNSNNNSSNEKEQL) are disordered. A compositionally biased stretch (low complexity) spans 55–65 (NNNSNSNNNSS).

Fungal signal recognition particle (SRP) complex consists of a 7S RNA molecule (scR1) and at least six protein subunits: SRP72, SRP68, SRP54, SEC65, SRP21 and SRP14.

It localises to the cytoplasm. Functionally, signal-recognition-particle (SRP) assembly has a crucial role in targeting secretory proteins to the rough endoplasmic reticulum (ER) membrane. SRP is required for the cotranslational protein translocation for ER import and preferentially recognizes strongly hydrophobic signal sequences. It is involved in targeting the nascent chain-ribosome (RNC) complex to the ER and is proposed to participate in the arrest of nascent chain elongation during membrane targeting. SEC65 is required for SRP integrity. The polypeptide is Signal recognition particle subunit SEC65 (SEC65) (Saccharomyces cerevisiae (strain ATCC 204508 / S288c) (Baker's yeast)).